Reading from the N-terminus, the 362-residue chain is 3-dehydroquinate synthase (362 aa).

Residues 70–75 (EGEQYK), 104–108 (GVIGD), 128–129 (TT), lysine 141, lysine 150, and 168–171 (TLTT) contribute to the NAD(+) site. 3 residues coordinate Zn(2+): glutamate 183, histidine 246, and histidine 263.

This sequence belongs to the sugar phosphate cyclases superfamily. Dehydroquinate synthase family. Co(2+) serves as cofactor. The cofactor is Zn(2+). NAD(+) is required as a cofactor.

The protein resides in the cytoplasm. It carries out the reaction 7-phospho-2-dehydro-3-deoxy-D-arabino-heptonate = 3-dehydroquinate + phosphate. The protein operates within metabolic intermediate biosynthesis; chorismate biosynthesis; chorismate from D-erythrose 4-phosphate and phosphoenolpyruvate: step 2/7. In terms of biological role, catalyzes the conversion of 3-deoxy-D-arabino-heptulosonate 7-phosphate (DAHP) to dehydroquinate (DHQ). The chain is 3-dehydroquinate synthase from Histophilus somni (strain 2336) (Haemophilus somnus).